The following is a 368-amino-acid chain: MSSRGGKKKSTKTSRSAKAGVIFPVGRMLRYIKKGHPKYRIGVGAPVYMAAVLEYLTAEILELAGNAARDNKKGRVTPRHILLAVANDEELNQLLKGVTIASGGVLPNIHPELLAKKRGSKGKLEAIITPPPAKKAKSPSQKKPVAKKTGGKKGARKSKKQGEVSKAASADSTTEGAPTDGFTVLSTKSLFLGQKLQVVQADIASIDSDAVVHPTNADFYIGGEVGSTLEKKGGKEFVEAVLELRKKNGPLEVAGAAVSAGHGLPAKFVIHCNSPVWGADKCEELLEKTVKNCLALADDRKLKSIAFPSIGSGRNGFPKQTAAQLILKAISSYFVSTMSSSIKTVYFVLFDSESIGIYVQEMAKLDAN.

In terms of domain architecture, Histone H2A spans 2–117; it reads SSRGGKKKST…NIHPELLAKK (116 aa). An N6-lactoyllysine; alternate mark is found at K7 and K9. Position 18 is an N6-methyllysine (K18). At K116 the chain carries N6-acetyllysine; alternate. A Glycyl lysine isopeptide (Lys-Gly) (interchain with G-Cter in ubiquitin); alternate cross-link involves residue K116. K117 is covalently cross-linked (Glycyl lysine isopeptide (Lys-Gly) (interchain with G-Cter in ubiquitin)). An N6-acetyllysine; alternate modification is found at K123. At K123 the chain carries N6,N6-dimethyllysine; alternate. K123 participates in a covalent cross-link: Glycyl lysine isopeptide (Lys-Gly) (interchain with G-Cter in SUMO2); alternate. The segment at 128–179 is disordered; it reads ITPPPAKKAKSPSQKKPVAKKTGGKKGARKSKKQGEVSKAASADSTTEGAPT. T129 carries the post-translational modification Phosphothreonine. The span at 144-159 shows a compositional bias: basic residues; sequence PVAKKTGGKKGARKSK. Residue K166 forms a Glycyl lysine isopeptide (Lys-Gly) (interchain with G-Cter in SUMO2) linkage. Phosphoserine is present on residues S169 and S172. Residues 183 to 366 form the Macro domain; sequence TVLSTKSLFL…IYVQEMAKLD (184 aa). Residue K188 forms a Glycyl lysine isopeptide (Lys-Gly) (interchain with G-Cter in SUMO2) linkage. D202, I203, V225, S274, G311, S312, G313, and N315 together coordinate a glycoprotein. A Glycyl lysine isopeptide (Lys-Gly) (interchain with G-Cter in SUMO2) cross-link involves residue K319.

It belongs to the histone H2A family. The nucleosome is a histone octamer containing two molecules each of H2A, H2B, H3 and H4 assembled in one H3-H4 heterotetramer and two H2A-H2B heterodimers. Interacts with HDAC1 and HDAC2. Interacts with SPOP. Part of a complex consisting of MACROH2A1, CUL3 and SPOP. As to quaternary structure, interacts with PARP1. Post-translationally, monoubiquitinated at either Lys-116 or Lys-117. May also be polyubiquitinated. Ubiquitination is mediated by the CUL3/SPOP E3 complex and does not promote proteasomal degradation. Instead, it is required for enrichment in inactive X chromosome chromatin. Present only in liver and brain (at protein level). In terms of tissue distribution, present in brain, thymus, testis, liver and kidney (at protein level).

The protein localises to the nucleus. It localises to the chromosome. In terms of biological role, variant histone H2A which replaces conventional H2A in a subset of nucleosomes where it represses transcription. Nucleosomes wrap and compact DNA into chromatin, limiting DNA accessibility to the cellular machineries which require DNA as a template. Histones thereby play a central role in transcription regulation, DNA repair, DNA replication and chromosomal stability. DNA accessibility is regulated via a complex set of post-translational modifications of histones, also called histone code, and nucleosome remodeling. Involved in stable X chromosome inactivation. Inhibits the binding of transcription factors, including NF-kappa-B, and interferes with the activity of remodeling SWI/SNF complexes. Inhibits histone acetylation by EP300 and recruits class I HDACs, which induces a hypoacetylated state of chromatin. Isoform that specifically binds poly-ADP-ribose and O-acetyl-ADP-ribose and plays a key role in NAD(+) metabolism. Able to bind to the ends of poly-ADP-ribose chains created by PARP1 and cap them. This prevents PARP1 from further addition of ADP-ribose and thus limits the consumption of nuclear NAD(+), allowing the cell to maintain proper NAD(+) levels in both the nucleus and the mitochondria to promote proper mitochondrial respiration. Increases the expression of genes involved in redox metabolism, including SOD3. Functionally, in contrast to isoform 1, does not bind poly-ADP-ribose. Represses SOD3 gene expression. In Rattus norvegicus (Rat), this protein is Core histone macro-H2A.1.